The chain runs to 505 residues: Chromosomal replication initiator protein DnaA (505 aa).

Residues 1-90 are domain I, interacts with DnaA modulators; the sequence is MSVELWQQCV…RRSSAPRAAP (90 aa). The interval 91–168 is domain II; the sequence is NAPVSAAVAA…QVEGALKHTS (78 aa). A domain III, AAA+ region region spans residues 169 to 385; it reads YLNRTFTFDT…GALKRVIAHS (217 aa). ATP-binding residues include glycine 213, glycine 215, lysine 216, and threonine 217. The segment at 386–505 is domain IV, binds dsDNA; the sequence is HFMGRDITIE…YKNLLRTLTT (120 aa).

Belongs to the DnaA family. As to quaternary structure, oligomerizes as a right-handed, spiral filament on DNA at oriC.

The protein resides in the cytoplasm. Functionally, plays an essential role in the initiation and regulation of chromosomal replication. ATP-DnaA binds to the origin of replication (oriC) to initiate formation of the DNA replication initiation complex once per cell cycle. Binds the DnaA box (a 9 base pair repeat at the origin) and separates the double-stranded (ds)DNA. Forms a right-handed helical filament on oriC DNA; dsDNA binds to the exterior of the filament while single-stranded (ss)DNA is stabiized in the filament's interior. The ATP-DnaA-oriC complex binds and stabilizes one strand of the AT-rich DNA unwinding element (DUE), permitting loading of DNA polymerase. After initiation quickly degrades to an ADP-DnaA complex that is not apt for DNA replication. Binds acidic phospholipids. The protein is Chromosomal replication initiator protein DnaA of Pseudomonas putida (strain ATCC 700007 / DSM 6899 / JCM 31910 / BCRC 17059 / LMG 24140 / F1).